Here is a 461-residue protein sequence, read N- to C-terminus: Cysteine--tRNA ligase (461 aa).

C28 contributes to the Zn(2+) binding site. Positions 30 to 40 (VTIYDLCHIGH) match the 'HIGH' region motif. C209, H234, and E238 together coordinate Zn(2+). Residues 266 to 270 (KMSKS) carry the 'KMSKS' region motif. K269 is an ATP binding site.

This sequence belongs to the class-I aminoacyl-tRNA synthetase family. As to quaternary structure, monomer. It depends on Zn(2+) as a cofactor.

Its subcellular location is the cytoplasm. The enzyme catalyses tRNA(Cys) + L-cysteine + ATP = L-cysteinyl-tRNA(Cys) + AMP + diphosphate. The chain is Cysteine--tRNA ligase from Edwardsiella ictaluri (strain 93-146).